A 213-amino-acid polypeptide reads, in one-letter code: Orotate phosphoribosyltransferase (213 aa).

K26 is a binding site for 5-phospho-alpha-D-ribose 1-diphosphate. Residue 34–35 participates in orotate binding; that stretch reads FF. Residues 72–73, R99, K100, K103, H105, and 124–132 each bind 5-phospho-alpha-D-ribose 1-diphosphate; these read YK and DDVITAGTA. The orotate site is built by T128 and R156.

The protein belongs to the purine/pyrimidine phosphoribosyltransferase family. PyrE subfamily. Homodimer. It depends on Mg(2+) as a cofactor.

It catalyses the reaction orotidine 5'-phosphate + diphosphate = orotate + 5-phospho-alpha-D-ribose 1-diphosphate. The protein operates within pyrimidine metabolism; UMP biosynthesis via de novo pathway; UMP from orotate: step 1/2. Catalyzes the transfer of a ribosyl phosphate group from 5-phosphoribose 1-diphosphate to orotate, leading to the formation of orotidine monophosphate (OMP). This is Orotate phosphoribosyltransferase from Edwardsiella ictaluri (strain 93-146).